A 109-amino-acid polypeptide reads, in one-letter code: ATP synthase subunit c (109 aa).

2 helical membrane passes run 42-62 (YIGT…QGFS) and 88-108 (LALA…IIFV).

Belongs to the ATPase C chain family. F-type ATPases have 2 components, F(1) - the catalytic core - and F(0) - the membrane proton channel. F(1) has five subunits: alpha(3), beta(3), gamma(1), delta(1), epsilon(1). F(0) has three main subunits: a(1), b(2) and c(10-14). The alpha and beta chains form an alternating ring which encloses part of the gamma chain. F(1) is attached to F(0) by a central stalk formed by the gamma and epsilon chains, while a peripheral stalk is formed by the delta and b chains.

Its subcellular location is the cell membrane. F(1)F(0) ATP synthase produces ATP from ADP in the presence of a proton or sodium gradient. F-type ATPases consist of two structural domains, F(1) containing the extramembraneous catalytic core and F(0) containing the membrane proton channel, linked together by a central stalk and a peripheral stalk. During catalysis, ATP synthesis in the catalytic domain of F(1) is coupled via a rotary mechanism of the central stalk subunits to proton translocation. Functionally, key component of the F(0) channel; it plays a direct role in translocation across the membrane. A homomeric c-ring of between 10-14 subunits forms the central stalk rotor element with the F(1) delta and epsilon subunits. The polypeptide is ATP synthase subunit c (Ureaplasma parvum serovar 3 (strain ATCC 27815 / 27 / NCTC 11736)).